A 463-amino-acid chain; its full sequence is Cysteine--tRNA ligase (463 aa).

Position 29 (Cys-29) interacts with Zn(2+). A 'HIGH' region motif is present at residues 31-41; sequence MTIYDLCHIGH. Zn(2+)-binding residues include Cys-218, His-243, and Glu-247. The 'KMSKS' region motif lies at 275–279; the sequence is KMSKS. Lys-278 provides a ligand contact to ATP.

It belongs to the class-I aminoacyl-tRNA synthetase family. Monomer. The cofactor is Zn(2+).

The protein resides in the cytoplasm. It catalyses the reaction tRNA(Cys) + L-cysteine + ATP = L-cysteinyl-tRNA(Cys) + AMP + diphosphate. In Polaromonas naphthalenivorans (strain CJ2), this protein is Cysteine--tRNA ligase.